A 202-amino-acid chain; its full sequence is High mobility group protein B3 (202 aa).

2 DNA-binding regions (HMG box) span residues 9–79 (PKGK…KDYG) and 93–161 (PKRP…ADYK). A cysteine sulfonic acid (-SO3H); alternate mark is found at Cys-23 and Cys-45. An intrachain disulfide couples Cys-23 to Cys-45. The interval 71–98 (YDREMKDYGPAKGGKKKKDPNAPKRPPS) is disordered. At Cys-104 the chain carries Cysteine sulfonic acid (-SO3H). A disordered region spans residues 161-202 (KSKGKFDGAKGAATKAARKKVEEEDEEEEEDEEEEDEDDDDE). Positions 183-202 (EEDEEEEEDEEEEDEDDDDE) are enriched in acidic residues.

It belongs to the HMGB family. Reduction/oxidation of cysteine residues Cys-23, Cys-45 and Cys-104 and a possible intramolecular disulfide bond involving Cys-23 and Cys-45 give rise to different redox forms with specific functional activities in various cellular compartments: 1- fully reduced HMGB3 (HMGB3C23hC45hC104h), 2- disulfide HMGB3 (HMGB3C23-C45C104h) and 3- sulfonyl HMGB3 (HMGB3C23soC45soC104so).

It is found in the nucleus. Its subcellular location is the chromosome. It localises to the cytoplasm. Its function is as follows. Multifunctional protein with various roles in different cellular compartments. May act in a redox sensitive manner. Associates with chromatin and binds DNA with a preference for non-canonical DNA structures such as single-stranded DNA. Can bend DNA and enhance DNA flexibility by looping thus providing a mechanism to promote activities on various gene promoters. Binds to the delta-1 crystallin/ASL1 enhancer. Proposed to be involved in the innate immune response to nucleic acids by acting as a cytoplasmic promiscuous immunogenic DNA/RNA sensor. The sequence is that of High mobility group protein B3 (HMGB3) from Gallus gallus (Chicken).